The sequence spans 458 residues: Transcription factor verZ (458 aa).

The zn(2)-C6 fungal-type DNA-binding region spans 117–144 (CDRCQAAKVKCGHEKPSCRRCTYHKVEC). Disordered stretches follow at residues 153–256 (GRPR…MQSM) and 435–458 (MEEE…EDGK). 3 stretches are compositionally biased toward polar residues: residues 167 to 186 (PSPQ…SKSA), 193 to 207 (FTGT…QSPV), and 223 to 235 (RAEP…TTNF).

The protein resides in the nucleus. Its function is as follows. Transcription factor; part of the gene cluster that mediates the biosynthesis of 11'-deoxyverticillin A, one of the dimeric epipolythiodioxopiperazines (ETPs) from the verticillin family that act as mycotoxins. 11'-deoxyverticillin A is required for normal conidiation. Directly binds the consensus motif 5'-(T/C)(C/A)(G/T)GN3CC(G/T)(A/G)(G/C)-3' localized in the upstream regions of the verticillin biosynthetic genes. This Clonostachys rogersoniana protein is Transcription factor verZ.